The primary structure comprises 387 residues: Involucrin (387 aa).

2 disordered regions span residues 1 to 319 (MSQQ…VHLG) and 347 to 387 (VCIP…LKQE). A compositionally biased stretch (polar residues) spans 28–37 (NTQQDQMKQP). The span at 62–71 (QVPEQECEPQ) shows a compositional bias: low complexity. Basic and acidic residues-rich tracts occupy residues 85–96 (KQQEPQEQEVHP), 104–115 (QEQEAHLGKKQE), 147–179 (QEVH…KQLQ), and 231–245 (QLEK…ELHL).

This sequence belongs to the involucrin family. Directly or indirectly cross-linked to cornifelin (CNFN). Post-translationally, substrate of transglutaminase. Specific glutamines or lysines are cross-linked to keratins, desmoplakin and to inter involucrin molecules. As to expression, keratinocytes of epidermis and other stratified squamous epithelia.

It is found in the cytoplasm. Its function is as follows. Part of the insoluble cornified cell envelope (CE) of stratified squamous epithelia. The sequence is that of Involucrin (IVL) from Cephalopachus bancanus (Western tarsier).